The chain runs to 297 residues: MSKIFVNPSAIRAGLADLEMAEETVDLINRNIEDNQAHLQGEPIEVDNLPEDMGRLHLDDGKSPNPGEMAKVGEGKYREDFQMDEGEDPSLLFQSYLDNVGVQIVRQIRSGERFLKIWSQTVEEIISYVAVNFPNPPGKSSEDKSTQTTGRELKKETTPTPSQRESQSSKARMAAQTASGPPALEWSATNEEDDLSVEAEIAHQIAESFSKKYKFPSRSSGILLYNFEQLKMNLDDIVKEAKNVPGVTRLARDGSKLPLRCVLGWVALANSKKFQLLVESNKLSKIMQDDLNRYTSC.

The short motif at 49-58 (LPEDMGRLHL) is the Nuclear export signal element. S63 carries the phosphoserine; by host modification. The interval 132–187 (NFPNPPGKSSEDKSTQTTGRELKKETTPTPSQRESQSSKARMAAQTASGPPALEWS) is disordered. Residues 138-172 (GKSSEDKSTQTTGRELKKETTPTPSQRESQSSKAR) form a DYNLL1 and DYNLL2 binding region. Positions 140–157 (SSEDKSTQTTGRELKKET) are enriched in basic and acidic residues. Polar residues predominate over residues 158 to 170 (TPTPSQRESQSSK). A phosphoserine; by host PKC mark is found at S162 and S210. Positions 211-214 (KKYK) match the Nuclear localization signal motif. Position 271 is a phosphoserine; by host PKC (S271).

This sequence belongs to the lyssavirus protein P family. In terms of assembly, homotrimer when phosphorylated. This trimer is stabilized by binding to the L protein. Binds soluble protein N, and ribonucleocapsid. Interacts with host DYNLL1 and DYNLL2; this interaction may play a role in intracellular microtubule-dependent virus transport of incoming virus. Interacts with host STAT1, STAT2 and PML. Interacts with host TBK1. Binds host PML. Phosphorylated by host PKC and by an unknown kinase.

It is found in the virion. The protein localises to the host cytoplasm. Its subcellular location is the host nucleus. Non catalytic polymerase cofactor and regulatory protein that plays a role in viral transcription and replication. Stabilizes the RNA polymerase L to the N-RNA template and binds the soluble protein N, preventing it from encapsidating non-genomic RNA. Also inhibits host IFN-alpha and IFN-beta signaling by binding and retaining phosphorylated STAT1 in the cytoplasm or by inhibiting the DNA binding of STAT1 in the nucleus. Might be involved, through interaction with host dynein, in intracellular microtubule-dependent virus transport of incoming virus from the synapse toward the cell body. Inhibits interferon induction pathways by interacting with host TBK1 and preventing the formation of dynamic cytoplasmic condensates that have liquid properties and that are essential for interferon production. The chain is Phosphoprotein (P) from Homo sapiens (Human).